The primary structure comprises 353 residues: Protein RecA (353 aa).

67–74 (GPESSGKT) contacts ATP.

Belongs to the RecA family.

It localises to the cytoplasm. Functionally, can catalyze the hydrolysis of ATP in the presence of single-stranded DNA, the ATP-dependent uptake of single-stranded DNA by duplex DNA, and the ATP-dependent hybridization of homologous single-stranded DNAs. It interacts with LexA causing its activation and leading to its autocatalytic cleavage. This is Protein RecA from Salmonella agona (strain SL483).